We begin with the raw amino-acid sequence, 382 residues long: cAMP-dependent protein kinase type I-alpha regulatory subunit (382 aa).

Alanine 2 bears the N-acetylalanine mark. The segment at 2-136 (ATSSSSSSEE…AALAKAIEKN (135 aa)) is dimerization and phosphorylation. A disordered region spans residues 62 to 96 (TKQLLNQQKSGSRSDSREDEISPPPPMNPVVKGRR). The short motif at 97-101 (RRGAI) is the Pseudophosphorylation motif element. Residues 138 to 255 (LFAH…SKVS), glutamate 203, arginine 212, 256 to 382 (ILES…SLSV), glutamate 327, and arginine 336 contribute to the 3',5'-cyclic AMP site.

The protein belongs to the cAMP-dependent kinase regulatory chain family. In terms of assembly, the inactive form of the enzyme is composed of two regulatory chains and two catalytic chains. Activation by cAMP produces two active catalytic monomers and a regulatory dimer that binds four cAMP molecules. The pseudophosphorylation site binds to the substrate-binding region of the catalytic chain but is not phosphorylated. The physiological significance of phosphorylations by other kinases is unclear.

It localises to the cell membrane. This Gallus gallus (Chicken) protein is cAMP-dependent protein kinase type I-alpha regulatory subunit (PRKAR1A).